Reading from the N-terminus, the 259-residue chain is 7alpha-hydroxysteroid dehydrogenase (259 aa).

Residues Ile-18, 37 to 38 (DY), and Asn-90 each bind NAD(+). The glycochenodeoxycholate site is built by Ser-145 and Tyr-158. NAD(+) contacts are provided by residues Tyr-158, Lys-162, and 191–193 (ILT). Residue Tyr-158 is the Proton acceptor of the active site.

Belongs to the short-chain dehydrogenases/reductases (SDR) family. Homotetramer.

The enzyme catalyses cholate + NAD(+) = 3alpha,12alpha-dihydroxy-7-oxo-5beta-cholanate + NADH + H(+). It carries out the reaction chenodeoxycholate + NAD(+) = 7-oxolithocholate + NADH + H(+). It catalyses the reaction taurochenodeoxycholate + NAD(+) = 7-oxotaurolithocholate + NADH + H(+). The catalysed reaction is glycochenodeoxycholate + NAD(+) = 7-oxoglycolithocholate + NADH + H(+). The enzyme catalyses taurocholate + NAD(+) = 7-oxo-taurodeoxycholate + NADH + H(+). It carries out the reaction glycocholate + NAD(+) = 7-oxo-glycodeoxycholate + NADH + H(+). It catalyses the reaction an aromatic primary alcohol + NAD(+) = an aromatic aldehyde + NADH + H(+). The catalysed reaction is benzyl alcohol + NAD(+) = benzaldehyde + NADH + H(+). The enzyme catalyses 4-cyanobenzyl alcohol + NAD(+) = 4-cyanobenzaldehyde + NADH + H(+). It carries out the reaction 4-acetoxybenzyl alcohol + NAD(+) = 4-acetoxybenzaldehyde + NADH + H(+). It catalyses the reaction 4-(trifluoromethyl)benzyl alcohol + NAD(+) = 4-(trifluoromethyl)benzaldehyde + NADH + H(+). Functionally, 7alpha-hydroxysteroid dehydrogenase involved in the metabolism of bile acids in the gut. Catalyzes the NAD(+)-dependent oxidation of the 7alpha-hydroxy group of 7alpha-hydroxysteroids, such as cholate, chenodeoxycholate, taurochenodeoxycholate, glycochenodeoxycholate, taurocholate and glycocholate, to the corresponding 7-oxosteroids. Since it is also able to catalyze the reduction of nonsteroidal carbonyl compounds such as various benzaldehyde analogs to their corresponding benzyl alcohols, this enzyme may also function in the detoxification of xenobiotics containing carbonyl groups in the large intestine. This Bacteroides fragilis (strain ATCC 25285 / DSM 2151 / CCUG 4856 / JCM 11019 / LMG 10263 / NCTC 9343 / Onslow / VPI 2553 / EN-2) protein is 7alpha-hydroxysteroid dehydrogenase.